A 243-amino-acid chain; its full sequence is Carboxy-S-adenosyl-L-methionine synthase (243 aa).

S-adenosyl-L-methionine is bound by residues Y40, 65 to 67, 90 to 91, 118 to 119, N133, and R200; these read GCS, DN, and DI.

This sequence belongs to the class I-like SAM-binding methyltransferase superfamily. Cx-SAM synthase family. Homodimer.

The enzyme catalyses prephenate + S-adenosyl-L-methionine = carboxy-S-adenosyl-L-methionine + 3-phenylpyruvate + H2O. Functionally, catalyzes the conversion of S-adenosyl-L-methionine (SAM) to carboxy-S-adenosyl-L-methionine (Cx-SAM). This chain is Carboxy-S-adenosyl-L-methionine synthase, found in Shewanella sp. (strain MR-7).